A 68-amino-acid chain; its full sequence is Phycobilisome 7.8 kDa linker polypeptide, allophycocyanin-associated, core (68 aa).

Positions 2 to 57 (ARLFKVTACVPSQTRIRTQRELQNTYFTKLVPFENWFREQQRIMKMGGKIVKVELA) constitute a CpcD-like domain.

It belongs to the phycobilisome linker protein family.

It localises to the cellular thylakoid membrane. Its function is as follows. Rod linker protein, associated with allophycocyanin. Linker polypeptides determine the state of aggregation and the location of the disk-shaped phycobiliprotein units within the phycobilisome and modulate their spectroscopic properties in order to mediate a directed and optimal energy transfer. In Microchaete diplosiphon (Fremyella diplosiphon), this protein is Phycobilisome 7.8 kDa linker polypeptide, allophycocyanin-associated, core (apcC).